A 178-amino-acid polypeptide reads, in one-letter code: MKIKAEIMDEKAIDRALIRIAHEIVERNKGIEDVVLVGIKTRGVPLAERIAKYISRIEGKKPPVGSLDITLYRDDLTTDLEQPLVKKKDIGVDVVGKIVVLVDDVIYTGRTIRAAMDAIIDLGRPKAIQLAELIDRGHRELPIKPDYVGKNVPTSKNEIVNVMLEEVDKVNRVVITEK.

The PRPP-binding motif lies at 99–111 (VVLVDDVIYTGRT).

Belongs to the purine/pyrimidine phosphoribosyltransferase family. PyrR subfamily. In terms of assembly, homodimer and homohexamer; in equilibrium.

The enzyme catalyses UMP + diphosphate = 5-phospho-alpha-D-ribose 1-diphosphate + uracil. In terms of biological role, regulates transcriptional attenuation of the pyrimidine nucleotide (pyr) operon by binding in a uridine-dependent manner to specific sites on pyr mRNA. This disrupts an antiterminator hairpin in the RNA and favors formation of a downstream transcription terminator, leading to a reduced expression of downstream genes. Its function is as follows. Also displays a weak uracil phosphoribosyltransferase activity which is not physiologically significant. This Thermoanaerobacter pseudethanolicus (strain ATCC 33223 / 39E) (Clostridium thermohydrosulfuricum) protein is Bifunctional protein PyrR.